Here is a 322-residue protein sequence, read N- to C-terminus: Aldo-keto reductase family 1 member C13 (322 aa).

NAD(+) is bound by residues 20 to 24 and Asp-50; that span reads GFGTY. Tyr-55 functions as the Proton donor in the catalytic mechanism. Residue His-117 coordinates substrate. NAD(+) contacts are provided by residues 166-167, Gln-190, 216-224, and 270-280; these read SN, FGALGTQRY, and QSFYESEMKEN.

This sequence belongs to the aldo/keto reductase family. Monomer. The N-terminus is blocked.

The catalysed reaction is morphine + NAD(+) = morphinone + NADH + H(+). It carries out the reaction morphine + NADP(+) = morphinone + NADPH + H(+). With respect to regulation, strongly inhibited by sulfhydryl reagents and ketamine, but not by pyrazole, barbital and indomethacine. In terms of biological role, catalyzes the dehydrogenation of morphine to morphinone. The enzyme also exhibits significant activity for a variety of cyclic and alicyclic alcohols. In addition to xenobiotics, the enzyme catalyzes the dehydrogenation of 17-beta-hydroxysteroids with much higher affinities than morphine. Uses both NAD and NADP, but the activity is much greater with NAD than with NADP. This Mesocricetus auratus (Golden hamster) protein is Aldo-keto reductase family 1 member C13 (AKR1C13).